A 205-amino-acid polypeptide reads, in one-letter code: E3 ubiquitin-protein ligase complex slx8-rfp subunit rfp2 (205 aa).

Residues 147 to 190 (CAKCGNELVSDEKKSIFAAKCGHLFCSTCAKELRKKTVPCPVQH) form an RING-type; degenerate zinc finger.

In terms of assembly, part of an E3 ubiquitin complex including rfp1, rfp2 and slx8. Interacts with slx8.

It localises to the nucleus. The catalysed reaction is S-ubiquitinyl-[E2 ubiquitin-conjugating enzyme]-L-cysteine + [acceptor protein]-L-lysine = [E2 ubiquitin-conjugating enzyme]-L-cysteine + N(6)-ubiquitinyl-[acceptor protein]-L-lysine.. It functions in the pathway protein modification; protein ubiquitination. Mediates ubiquitination and subsequent desumoylation/degradation of sumoylated proteins and proteins containing SUMO-like domains. Involved in maintaining genome stability where it acts in the cellular response to DNA damage. This Schizosaccharomyces pombe (strain 972 / ATCC 24843) (Fission yeast) protein is E3 ubiquitin-protein ligase complex slx8-rfp subunit rfp2 (rfp2).